The chain runs to 311 residues: Ribosomal RNA small subunit methyltransferase H (311 aa).

S-adenosyl-L-methionine-binding positions include 39–41 (GGH), Asp59, Phe81, Asp102, and His109.

This sequence belongs to the methyltransferase superfamily. RsmH family.

The protein resides in the cytoplasm. It carries out the reaction cytidine(1402) in 16S rRNA + S-adenosyl-L-methionine = N(4)-methylcytidine(1402) in 16S rRNA + S-adenosyl-L-homocysteine + H(+). Functionally, specifically methylates the N4 position of cytidine in position 1402 (C1402) of 16S rRNA. The chain is Ribosomal RNA small subunit methyltransferase H from Porphyromonas gingivalis (strain ATCC BAA-308 / W83).